We begin with the raw amino-acid sequence, 504 residues long: uncharacterized protein (504 aa).

2 disordered regions span residues 1 to 59 (MSSS…KNEY) and 171 to 255 (GVNS…NQRL). 2 stretches are compositionally biased toward basic and acidic residues: residues 36 to 50 (KPID…KEIG) and 199 to 212 (RAET…ESRQ). The segment covering 213–232 (SNRGNNDNGDQRMTSKATTR) has biased composition (polar residues).

This is an uncharacterized protein from Caenorhabditis elegans.